Here is a 316-residue protein sequence, read N- to C-terminus: Olfactory receptor 1N2 (316 aa).

Residues 1 to 28 lie on the Extracellular side of the membrane; sequence MGKPGRVNQTTVSDFLLLGLSEWPEEQP. Residue N8 is glycosylated (N-linked (GlcNAc...) asparagine). A helical membrane pass occupies residues 29–49; that stretch reads LLFGIFLGMYLVTMVGNLLII. Residues 50-60 lie on the Cytoplasmic side of the membrane; the sequence is LAISSDPHLHT. The helical transmembrane segment at 61 to 81 threads the bilayer; sequence PMYFFLANLSLTDACFTSASI. Residues 82–100 lie on the Extracellular side of the membrane; sequence PKMLANIHTQSQIISYSGC. C100 and C182 are disulfide-bonded. The chain crosses the membrane as a helical span at residues 101 to 121; that stretch reads LAQLYFLLMFGGLDNCLLAVM. Topologically, residues 122–145 are cytoplasmic; it reads AYDRYVAICQPLHYSTSMSPQLCA. A helical membrane pass occupies residues 146–166; sequence LMLGVCWVLTNCPALMHTLLL. The Extracellular portion of the chain corresponds to 167–199; that stretch reads TRVAFCAQKAIPHFYCDPSALLKLACSDTHVNE. The chain crosses the membrane as a helical span at residues 200 to 220; sequence LMIITMGLLFLTVPLLLIVFS. At 221 to 243 the chain is on the cytoplasmic side; it reads YVRIFWAVFVISSPGGRWKAFST. The chain crosses the membrane as a helical span at residues 244 to 264; that stretch reads CGSHLTVVLLFYGSLMGVYLL. Residues 265–274 lie on the Extracellular side of the membrane; the sequence is PPSTYSTERE. The helical transmembrane segment at 275 to 295 threads the bilayer; the sequence is SRAAVLYMVIIPTLNPFIYSL. Topologically, residues 296–316 are cytoplasmic; sequence RNRDMKEALGKLFVSGKTFFL.

It belongs to the G-protein coupled receptor 1 family.

The protein resides in the membrane. In terms of biological role, odorant receptor. The protein is Olfactory receptor 1N2 (OR1N2) of Homo sapiens (Human).